The following is a 345-amino-acid chain: Ribosomal RNA large subunit methyltransferase F (345 aa).

The segment covering 1–14 (MTSKPMTRRPTANN) has biased composition (polar residues). Disordered regions lie at residues 1 to 35 (MTSK…RNPH) and 225 to 258 (EANS…NAAQ). Residues 229-239 (RKQHNLQRHRG) show a composition bias toward basic residues. Residues 246 to 258 (ISRSSTKSGNAAQ) are compositionally biased toward polar residues.

This sequence belongs to the methyltransferase superfamily. METTL16/RlmF family.

It localises to the cytoplasm. The catalysed reaction is adenosine(1618) in 23S rRNA + S-adenosyl-L-methionine = N(6)-methyladenosine(1618) in 23S rRNA + S-adenosyl-L-homocysteine + H(+). Functionally, specifically methylates the adenine in position 1618 of 23S rRNA. The sequence is that of Ribosomal RNA large subunit methyltransferase F from Psychrobacter arcticus (strain DSM 17307 / VKM B-2377 / 273-4).